The following is a 528-amino-acid chain: Calcium-dependent protein kinase 4 (528 aa).

Positions 1–36 (MGQEVSSVNNTKNEHHKTNKKSLKGGNERHEMKESS) are disordered. Gly-2 is lipidated: N-myristoyl glycine. Residues 14–23 (EHHKTNKKSL) show a composition bias toward basic residues. Residues 71–329 (KGIKILGKGS…RDALEHEWIK (259 aa)) enclose the Protein kinase domain. Residues 76–84 (LGKGSFGEV) and Lys-99 each bind ATP. The active-site Proton acceptor is Asp-193. The J domain autoinhibitory motif signature appears at 350 to 358 (NIRQFQSTQ). Residues 350-386 (NIRQFQSTQKLAQAALLYMGSKLTTIDETKELTKIFK) are j domain. The J domain EF-hand interaction motif signature appears at 359-368 (KLAQAALLYM). 4 EF-hand domains span residues 376 to 411 (DETK…LLKL), 427 to 458 (EVDQ…RKLL), 459 to 494 (LSTE…SDVS), and 496 to 528 (ECWK…LCNY). Ca(2+)-binding residues include Asp-389, Asn-391, Asp-393, Gln-395, Glu-400, Asp-436, Asp-438, Asn-440, Tyr-442, Glu-447, Asp-472, Asp-474, Ser-476, Lys-478, Glu-483, Asp-506, Asn-508, Asp-510, Glu-512, and Glu-517.

The protein belongs to the protein kinase superfamily. Ser/Thr protein kinase family. CDPK subfamily. As to quaternary structure, may interact with the pre-replication MCM complex prior male gametogenesis activation. Mg(2+) serves as cofactor. Myristoylated; myristoylation may target it to different subcellular compartments. During male gametogenesis, myristoylation is required to initiate DNA replication but not for mitotic spindle assembly or axoneme activation. In terms of processing, not palmitoylated. Post-translationally, may be autophosphorylated on Thr-234 in vitro.

It is found in the cytoplasm. It localises to the cell membrane. It catalyses the reaction L-seryl-[protein] + ATP = O-phospho-L-seryl-[protein] + ADP + H(+). It carries out the reaction L-threonyl-[protein] + ATP = O-phospho-L-threonyl-[protein] + ADP + H(+). Activated by calcium. Upon calcium binding to the EF-hand domains, the C-terminus of the junction domain (J domain) undergoes a conformational change which results in the dissociation of the pseudo-substrate inhibitory motif from the catalytic domain. This, in turn, may facilitate the autophosphorylation of the activation loop at Thr-234, which leads to the kinase activation. Intracellular calcium increase is triggered by xanthurenic acid (XA), a small mosquito molecule that induces the differentiation of specialized transmission stages, the gametocytes, into male and female gametes. Activated by a decrease in temperature (20 degrees Celsius) and an increase in pH (7.6) occurring when the parasite is ingested by in the mosquito. Functionally, calcium-dependent protein kinase which acts as a sensor and effector of intracellular Ca(2+) levels probably in part downstream of cGMP-activated PKG kinase. Plays a central role in the host erythrocytes and hepatocytes infection cycles, sexual reproduction and mosquito transmission of the parasite. During the liver stage, involved in sporozoite motility and thus in sporozoite invasion of host hepatocytes, probably together with CDPK1 and CDPK5. Involved in merosome egress from host hepatocytes, probably together with CDPK5. During the asexual blood stage, involved in merozoite invasion of host erythrocytes and motility by stabilizing the inner membrane complex, a structure below the plasma membrane which acts as an anchor for the glidosome, an acto-myosin motor. Required for cell cycle progression in the male gametocyte. During male gametogenesis in the mosquito gut, required to initiate the first round of DNA replication, probably by facilitating the assembly of the pre-replicative MCM complex, to assemble the first mitotic spindle and, at the end of gametogenesis, to initiate axoneme motility, cytokinesis and subsequent exflagellation. For each of these steps, may phosphorylate SOC1, SOC2 and SOC3, respectively. Together with CDPK1, regulates ookinete gliding in the mosquito host midgut. The sequence is that of Calcium-dependent protein kinase 4 from Plasmodium falciparum (isolate 3D7).